The following is a 325-amino-acid chain: Elongation factor P--(R)-beta-lysine ligase (325 aa).

Residue 76–78 participates in substrate binding; sequence SPE. Residues 100-102 and Asn109 each bind ATP; that span reads RNE. Tyr118 provides a ligand contact to substrate. 244-245 serves as a coordination point for ATP; sequence EL. Glu251 is a substrate binding site. Gly300 lines the ATP pocket.

It belongs to the class-II aminoacyl-tRNA synthetase family. EpmA subfamily. Homodimer.

It catalyses the reaction D-beta-lysine + L-lysyl-[protein] + ATP = N(6)-((3R)-3,6-diaminohexanoyl)-L-lysyl-[protein] + AMP + diphosphate + H(+). With EpmB is involved in the beta-lysylation step of the post-translational modification of translation elongation factor P (EF-P) on 'Lys-34'. Catalyzes the ATP-dependent activation of (R)-beta-lysine produced by EpmB, forming a lysyl-adenylate, from which the beta-lysyl moiety is then transferred to the epsilon-amino group of EF-P 'Lys-34'. In Escherichia coli O139:H28 (strain E24377A / ETEC), this protein is Elongation factor P--(R)-beta-lysine ligase.